The following is a 241-amino-acid chain: Fatty acid metabolism regulator protein (241 aa).

The HTH gntR-type domain maps to Gln11 to Ile79. Residues Glu39–Gln58 constitute a DNA-binding region (H-T-H motif).

As to quaternary structure, homodimer.

The protein localises to the cytoplasm. Multifunctional regulator of fatty acid metabolism. In Haemophilus influenzae (strain ATCC 51907 / DSM 11121 / KW20 / Rd), this protein is Fatty acid metabolism regulator protein.